The primary structure comprises 122 residues: ATP synthase epsilon chain (122 aa).

The span at 97-112 (EDLKSERELTRSRGDA) shows a compositional bias: basic and acidic residues. The tract at residues 97-122 (EDLKSERELTRSRGDAALRATRRLNS) is disordered.

It belongs to the ATPase epsilon chain family. In terms of assembly, F-type ATPases have 2 components, CF(1) - the catalytic core - and CF(0) - the membrane proton channel. CF(1) has five subunits: alpha(3), beta(3), gamma(1), delta(1), epsilon(1). CF(0) has three main subunits: a, b and c.

The protein localises to the cell membrane. Its function is as follows. Produces ATP from ADP in the presence of a proton gradient across the membrane. In Corynebacterium aurimucosum (strain ATCC 700975 / DSM 44827 / CIP 107346 / CN-1) (Corynebacterium nigricans), this protein is ATP synthase epsilon chain.